Consider the following 290-residue polypeptide: ATP synthase gamma chain (290 aa).

The protein belongs to the ATPase gamma chain family. F-type ATPases have 2 components, CF(1) - the catalytic core - and CF(0) - the membrane proton channel. CF(1) has five subunits: alpha(3), beta(3), gamma(1), delta(1), epsilon(1). CF(0) has three main subunits: a, b and c.

The protein resides in the cell inner membrane. Its function is as follows. Produces ATP from ADP in the presence of a proton gradient across the membrane. The gamma chain is believed to be important in regulating ATPase activity and the flow of protons through the CF(0) complex. The sequence is that of ATP synthase gamma chain from Dictyoglomus turgidum (strain DSM 6724 / Z-1310).